A 143-amino-acid polypeptide reads, in one-letter code: Transcription antitermination protein NusB (143 aa).

Belongs to the NusB family.

Its function is as follows. Involved in transcription antitermination. Required for transcription of ribosomal RNA (rRNA) genes. Binds specifically to the boxA antiterminator sequence of the ribosomal RNA (rrn) operons. The sequence is that of Transcription antitermination protein NusB from Dehalococcoides mccartyi (strain ATCC BAA-2266 / KCTC 15142 / 195) (Dehalococcoides ethenogenes (strain 195)).